Here is a 295-residue protein sequence, read N- to C-terminus: Phosphatidylserine decarboxylase proenzyme (295 aa).

Catalysis depends on charge relay system; for autoendoproteolytic cleavage activity residues Asp113, His169, and Ser256. The Schiff-base intermediate with substrate; via pyruvic acid; for decarboxylase activity role is filled by Ser256. Ser256 is modified (pyruvic acid (Ser); by autocatalysis).

Belongs to the phosphatidylserine decarboxylase family. PSD-B subfamily. Prokaryotic type II sub-subfamily. As to quaternary structure, heterodimer of a large membrane-associated beta subunit and a small pyruvoyl-containing alpha subunit. Requires pyruvate as cofactor. Is synthesized initially as an inactive proenzyme. Formation of the active enzyme involves a self-maturation process in which the active site pyruvoyl group is generated from an internal serine residue via an autocatalytic post-translational modification. Two non-identical subunits are generated from the proenzyme in this reaction, and the pyruvate is formed at the N-terminus of the alpha chain, which is derived from the carboxyl end of the proenzyme. The autoendoproteolytic cleavage occurs by a canonical serine protease mechanism, in which the side chain hydroxyl group of the serine supplies its oxygen atom to form the C-terminus of the beta chain, while the remainder of the serine residue undergoes an oxidative deamination to produce ammonia and the pyruvoyl prosthetic group on the alpha chain. During this reaction, the Ser that is part of the protease active site of the proenzyme becomes the pyruvoyl prosthetic group, which constitutes an essential element of the active site of the mature decarboxylase.

Its subcellular location is the cell membrane. It carries out the reaction a 1,2-diacyl-sn-glycero-3-phospho-L-serine + H(+) = a 1,2-diacyl-sn-glycero-3-phosphoethanolamine + CO2. The protein operates within phospholipid metabolism; phosphatidylethanolamine biosynthesis; phosphatidylethanolamine from CDP-diacylglycerol: step 2/2. Its function is as follows. Catalyzes the formation of phosphatidylethanolamine (PtdEtn) from phosphatidylserine (PtdSer). This Clostridium botulinum (strain ATCC 19397 / Type A) protein is Phosphatidylserine decarboxylase proenzyme.